The chain runs to 277 residues: Undecaprenyl-diphosphatase (277 aa).

Helical transmembrane passes span 19–39 (FLPVSSTGHLFLFSSFFPFYG), 44–64 (FDDLFDIFIQSGAILSVLFLY), 89–109 (FHFLIQICIGAFPILIAGFIA), 122–142 (LLEILSGAWIFGGVLILVAEW), 154–174 (IGFKDSILIGIFQCMALIPGM), 195–215 (AEFSFFLAVPVLLAAGIYKLI), 224–244 (NTIPVLMFGFLVSFLLCTLVI), and 257–277 (SVFGVYRILLGVGVLVLTKLI).

Belongs to the UppP family.

It is found in the cell inner membrane. The catalysed reaction is di-trans,octa-cis-undecaprenyl diphosphate + H2O = di-trans,octa-cis-undecaprenyl phosphate + phosphate + H(+). Catalyzes the dephosphorylation of undecaprenyl diphosphate (UPP). Confers resistance to bacitracin. The sequence is that of Undecaprenyl-diphosphatase from Leptospira interrogans serogroup Icterohaemorrhagiae serovar copenhageni (strain Fiocruz L1-130).